Here is a 377-residue protein sequence, read N- to C-terminus: Erythronate-4-phosphate dehydrogenase (377 aa).

Substrate is bound by residues Ser-45 and Thr-67. Residues 127–128 (QV), Asp-147, and Thr-176 each bind NAD(+). The active site involves Arg-209. Asp-233 is a binding site for NAD(+). Glu-238 is an active-site residue. His-255 serves as the catalytic Proton donor. Position 258 (Gly-258) interacts with NAD(+). Position 259 (Tyr-259) interacts with substrate.

It belongs to the D-isomer specific 2-hydroxyacid dehydrogenase family. PdxB subfamily. As to quaternary structure, homodimer.

The protein resides in the cytoplasm. The enzyme catalyses 4-phospho-D-erythronate + NAD(+) = (R)-3-hydroxy-2-oxo-4-phosphooxybutanoate + NADH + H(+). It functions in the pathway cofactor biosynthesis; pyridoxine 5'-phosphate biosynthesis; pyridoxine 5'-phosphate from D-erythrose 4-phosphate: step 2/5. Its function is as follows. Catalyzes the oxidation of erythronate-4-phosphate to 3-hydroxy-2-oxo-4-phosphonooxybutanoate. The protein is Erythronate-4-phosphate dehydrogenase of Vibrio vulnificus (strain CMCP6).